A 206-amino-acid chain; its full sequence is Octanoyltransferase (206 aa).

The 177-residue stretch at 30–206 folds into the BPL/LPL catalytic domain; it reads PETNDEIWLV…EFVTLLNNSI (177 aa). Residues 69 to 76, 137 to 139, and 150 to 152 each bind substrate; these read RGGQVTYH, SLG, and GIA. Catalysis depends on Cys168, which acts as the Acyl-thioester intermediate.

This sequence belongs to the LipB family.

Its subcellular location is the cytoplasm. The catalysed reaction is octanoyl-[ACP] + L-lysyl-[protein] = N(6)-octanoyl-L-lysyl-[protein] + holo-[ACP] + H(+). The protein operates within protein modification; protein lipoylation via endogenous pathway; protein N(6)-(lipoyl)lysine from octanoyl-[acyl-carrier-protein]: step 1/2. Its function is as follows. Catalyzes the transfer of endogenously produced octanoic acid from octanoyl-acyl-carrier-protein onto the lipoyl domains of lipoate-dependent enzymes. Lipoyl-ACP can also act as a substrate although octanoyl-ACP is likely to be the physiological substrate. The protein is Octanoyltransferase of Francisella tularensis subsp. tularensis (strain FSC 198).